We begin with the raw amino-acid sequence, 90 residues long: Small ribosomal subunit protein uS15 (90 aa).

The protein belongs to the universal ribosomal protein uS15 family. Part of the 30S ribosomal subunit. Forms a bridge to the 50S subunit in the 70S ribosome, contacting the 23S rRNA.

One of the primary rRNA binding proteins, it binds directly to 16S rRNA where it helps nucleate assembly of the platform of the 30S subunit by binding and bridging several RNA helices of the 16S rRNA. Its function is as follows. Forms an intersubunit bridge (bridge B4) with the 23S rRNA of the 50S subunit in the ribosome. The polypeptide is Small ribosomal subunit protein uS15 (Paraburkholderia xenovorans (strain LB400)).